A 528-amino-acid polypeptide reads, in one-letter code: Protein arginine N-methyltransferase 3 (528 aa).

The segment at 1 to 43 (MCSLAAGNGRGAELGPEPLELSDSGDDAGWEDEDADTEPAHGR) is disordered. The residue at position 2 (C2) is an N-acetylcysteine. Residues S22 and S24 each carry the phosphoserine modification. The segment covering 23 to 37 (DSGDDAGWEDEDADT) has biased composition (acidic residues). The segment at 46–69 (TPCLFCDRLFASAEETFSHCKLEH) adopts a C2H2-type zinc-finger fold. Position 169 is a phosphoserine (S169). Residues 184-528 (MKQFAQDFVM…NSSTQTYSLQ (345 aa)) form a mediates interaction with ALDH1A1 region. Residues 214 to 528 (DGVYFSSYGH…NSSTQTYSLQ (315 aa)) enclose the SAM-dependent MTase PRMT-type domain. S-adenosyl-L-homocysteine-binding residues include R236, G260, D282, S284, I310, and E311. Catalysis depends on residues E326 and E335.

Belongs to the class I-like SAM-binding methyltransferase superfamily. Protein arginine N-methyltransferase family. As to quaternary structure, monomer and homodimer. Interacts with EPB41L3 (via FERM domain); the interaction is direct and inhibits the protein-arginine N-methyltransferase activity of PRMT3. Interacts with the 40S ribosomal protein RPS2. Interacts with ALDH1A1; the interaction is direct, inhibits ALDH1A1 aldehyde dehydrogenase activity and is independent of the methyltransferase activity of PRMT3.

Its subcellular location is the cytoplasm. The protein localises to the cytosol. It is found in the nucleus. It catalyses the reaction L-arginyl-[protein] + S-adenosyl-L-methionine = N(omega)-methyl-L-arginyl-[protein] + S-adenosyl-L-homocysteine + H(+). The enzyme catalyses L-arginyl-[protein] + 2 S-adenosyl-L-methionine = N(omega),N(omega)-dimethyl-L-arginyl-[protein] + 2 S-adenosyl-L-homocysteine + 2 H(+). Its activity is regulated as follows. Inhibited by N-ethylmaleimide and high concentrations of zinc chloride. Its function is as follows. Protein-arginine N-methyltransferase that catalyzes both the monomethylation and asymmetric dimethylation of the guanidino nitrogens of arginine residues in target proteins, and therefore falls into the group of type I methyltransferases. Catalyzes the asymmetric arginine dimethylation at multiple sites in the Arg/Gly-rich region of small ribosomal subunit protein uS5/RPS2. Also appears to methylate other ribosomal proteins. May regulate retinoic acid synthesis and signaling by inhibiting ALDH1A1 retinal dehydrogenase activity. Contributes to methylation of histone H4 'Arg-3', a specific tag for epigenetic transcriptional activation. Promotes osteogenesis. The polypeptide is Protein arginine N-methyltransferase 3 (Mus musculus (Mouse)).